A 367-amino-acid chain; its full sequence is 3-ketodihydrosphingosine reductase ksrA (367 aa).

Residues 12 to 32 (ASPATLGISLILCGFIVYSVS) form a helical membrane-spanning segment. Residues Gly-53, Ser-55, Gly-57, Arg-78, Lys-82, Asp-108, and Leu-109 each contribute to the NADPH site. The short motif at 53 to 57 (GGSDG) is the GXSXG element. Residues 193–213 (LIFTCSTLAFVSIAGYAPYSP) form a helical membrane-spanning segment. Residue Tyr-211 is the Proton acceptor of the active site. Tyr-211, Lys-215, and Ile-259 together coordinate NADP(+). Lys-215 acts as the Lowers pKa of active site Tyr in catalysis.

Belongs to the short-chain dehydrogenases/reductases (SDR) family.

The protein resides in the endoplasmic reticulum membrane. It catalyses the reaction sphinganine + NADP(+) = 3-oxosphinganine + NADPH + H(+). It participates in lipid metabolism; sphingolipid metabolism. Its function is as follows. Catalyzes the reduction of 3'-oxosphinganine (3-ketodihydrosphingosine/KDS) to sphinganine (dihydrosphingosine/DHS), the second step of de novo sphingolipid biosynthesis. In Aspergillus fumigatus (strain ATCC MYA-4609 / CBS 101355 / FGSC A1100 / Af293) (Neosartorya fumigata), this protein is 3-ketodihydrosphingosine reductase ksrA.